Consider the following 269-residue polypeptide: Protein OPG079 (269 aa).

It belongs to the orthopoxvirus OPG079 family. In terms of assembly, homoomultimer (Potential). Interacts with the small subunit of ribonucleotide reductase. Interacts with host FAM111A; this interaction protomtes OPG079 degradation through autophagy.

The protein localises to the host cytoplasm. Its function is as follows. Plays an essential role in viral DNA replication. Binds to ssDNA with high affinity and localizes to cytoplasmic factories where nascent viral genomes accumulate. May disrupt loops, hairpins and other secondary structures present on ssDNA to reduce and eliminate pausing of viral DNA polymerase at specific sites during elongation. The polypeptide is Protein OPG079 (OPG079) (Bos taurus (Bovine)).